The following is a 407-amino-acid chain: Polygalacturonase (407 aa).

Positions 1 to 26 are cleaved as a signal peptide; that stretch reads MAPHLNIVPSMFVLLLLFISASKVQP. PbH1 repeat units lie at residues 180–206 and 207–228; these read CKNI…HMGK and SEGV…SIGD. A glycan (N-linked (GlcNAc...) asparagine) is linked at Asn182. The Proton donor role is filled by Asp221. An intrachain disulfide couples Cys223 to Cys240. Residue His244 is part of the active site. 2 PbH1 repeats span residues 260–281 and 290–311; these read VEGI…RIKT and VSEI…LIDQ. 4 N-linked (GlcNAc...) asparagine glycosylation sites follow: Asn267, Asn272, Asn302, and Asn331. 2 cysteine pairs are disulfide-bonded: Cys351–Cys357 and Cys379–Cys395. The PbH1 5 repeat unit spans residues 357–384; it reads CQNVELADIDIQHNGAEPATSQCLNVKP.

Belongs to the glycosyl hydrolase 28 family. As to expression, pollen.

Its subcellular location is the secreted. It is found in the cell wall. The enzyme catalyses (1,4-alpha-D-galacturonosyl)n+m + H2O = (1,4-alpha-D-galacturonosyl)n + (1,4-alpha-D-galacturonosyl)m.. Its function is as follows. May function in the depolymerization of the pectin in its walls during pollen tube elongation, or in that of the pistil during pollination. The sequence is that of Polygalacturonase (G9) from Gossypium barbadense (Sea Island cotton).